The chain runs to 447 residues: Tubulin beta-1 chain (447 aa).

Positions 11, 69, 138, 142, 143, 144, 204, and 226 each coordinate GTP. A Mg(2+)-binding site is contributed by Glu69. The segment at 427 to 447 (EATADEDAEFEEEQEAEVEEN) is disordered. Residues 429-447 (TADEDAEFEEEQEAEVEEN) are compositionally biased toward acidic residues.

Belongs to the tubulin family. As to quaternary structure, dimer of alpha and beta chains. A typical microtubule is a hollow water-filled tube with an outer diameter of 25 nm and an inner diameter of 15 nM. Alpha-beta heterodimers associate head-to-tail to form protofilaments running lengthwise along the microtubule wall with the beta-tubulin subunit facing the microtubule plus end conferring a structural polarity. Microtubules usually have 13 protofilaments but different protofilament numbers can be found in some organisms and specialized cells. The cofactor is Mg(2+).

The protein localises to the cytoplasm. The protein resides in the cytoskeleton. Tubulin is the major constituent of microtubules, a cylinder consisting of laterally associated linear protofilaments composed of alpha- and beta-tubulin heterodimers. Microtubules grow by the addition of GTP-tubulin dimers to the microtubule end, where a stabilizing cap forms. Below the cap, tubulin dimers are in GDP-bound state, owing to GTPase activity of alpha-tubulin. The sequence is that of Tubulin beta-1 chain from Glossina morsitans morsitans (Savannah tsetse fly).